We begin with the raw amino-acid sequence, 737 residues long: MFGGLLGEETKRHFERLMKTKNDRLGASHRNERSIRDGDMVDAPFLNFAIPVPRRHQTVMPAIGILHNCCDSLGIYSAITTRMLYSSIACSEFDELRRDSVPRCYPRITNAQAFLSPMMMRVANSIIFQEYDEMECAAHRNAYYSTMNSFISMRTSDAFKQLTVFISRFSKLLIASFRDVNKLDDHTVKKRARIDAPSYDKLHGTLELFQKMILMHATYFVTSVLLGDHAERAERLLRVAFDTPHFSDIVTRHFRQRATVFLVPRRHGKTWFLVPLIALAMSSFEGIRIGYTSHIRKAIEPVFEDIGDRLRRWFGAHRVDHVKGETITFSFPSGLKSTVTFASSHNTNSIRGQDFNLLFVDEANFIRPDAVQTIIGFLNQATCKIIFVSSTNSGKASTSFLYGLKGSADDLLNVVTYICDEHMKHVTDYTNATSCSCYVLNKPVFITMDGAMRRTAEMFLPDSFMQEIIGGGVVDRTICQGDRSIFTASAIDRFLIYRPSTVNNQDPFSQDLYVYVDPAFTANTKASGTGVAVIGKYGTDYIVFGLEHYFLRALTGESSDSIGYCVAQCLIQICAIHRKRFGVIKIAIEGNSNQDSAVAIATRIAIEMISYMKAAVAPTPHNVSFYHSKSNGTDVEYPYFLLQRQKTTAFDFFIAQFNSGRVLASQDLVSTTVSLTTDPVEYLTKQLTNISEVVTGPTCTRTFSGKKGGNDDTVVALTMAVYISAHIPDMAFAPIRV.

Residues 188–194 (VKKRARI) carry the Nuclear localization signal motif. A Walker A motif motif is present at residues 263 to 270 (VPRRHGKT). A Walker B motif motif is present at residues 357 to 362 (LLFVDE). E362 serves as the catalytic For ATPase activity. Active-site for nuclease activity residues include D517, E589, and D712.

This sequence belongs to the herpesviridae TRM3 protein family. In terms of assembly, interacts with the terminase subunits TRM1 and TRM2. Interacts with portal protein.

The protein resides in the host nucleus. Component of the molecular motor that translocates viral genomic DNA in empty capsid during DNA packaging. Forms a tripartite terminase complex together with TRM1 and TRM2 in the host cytoplasm. Once the complex reaches the host nucleus, it interacts with the capsid portal vertex. This portal forms a ring in which genomic DNA is translocated into the capsid. TRM3 carries an RNase H-like nuclease activity that plays an important role for the cleavage of concatemeric viral DNA into unit length genomes. The polypeptide is Tripartite terminase subunit 3 (Gallus gallus (Chicken)).